Here is a 134-residue protein sequence, read N- to C-terminus: Beta-synuclein (134 aa).

2 tandem repeats follow at residues 20-30 and 31-41. Residues 20–67 are 4 X 11 AA tandem repeats of [EGS]-K-T-K-[EQ]-[GQ]-V-X(4); sequence EKTKQGVTEAAEKTKEGVLYVGSKTKEGVVQGVASVAEKTKEQASHLG. One copy of the 3; approximate repeat lies at 42–56; that stretch reads SKTKEGVVQGVASVA. Repeat unit 4 spans residues 57-67; the sequence is EKTKEQASHLG. A disordered region spans residues 97 to 134; it reads EVAQEAAEEPLIEPLMEPEGESYEEQPQEEYQEYEPEA. A compositionally biased stretch (acidic residues) spans 98 to 134; that stretch reads VAQEAAEEPLIEPLMEPEGESYEEQPQEEYQEYEPEA. S118 is subject to Phosphoserine; by BARK1, CK2 and GRK5.

Belongs to the synuclein family. Post-translationally, phosphorylated. Phosphorylation by G-protein coupled receptor kinases (GRK) is more efficient than phosphorylation by CK1, CK2 and CaM-kinase II. In terms of tissue distribution, specifically present in synapses around neurons but not in glial cells.

It localises to the cytoplasm. May be involved in neuronal plasticity. The polypeptide is Beta-synuclein (SNCB) (Bos taurus (Bovine)).